The sequence spans 407 residues: Imidazolonepropionase (407 aa).

2 residues coordinate Fe(3+): His-74 and His-76. His-74 and His-76 together coordinate Zn(2+). Residues Arg-83, Tyr-146, and His-179 each contribute to the 4-imidazolone-5-propanoate site. Residue Tyr-146 coordinates N-formimidoyl-L-glutamate. Fe(3+) is bound at residue His-244. Residue His-244 coordinates Zn(2+). Gln-247 is a binding site for 4-imidazolone-5-propanoate. Fe(3+) is bound at residue Asp-319. Asp-319 is a Zn(2+) binding site. Positions 321 and 323 each coordinate N-formimidoyl-L-glutamate. Position 324 (Thr-324) interacts with 4-imidazolone-5-propanoate.

This sequence belongs to the metallo-dependent hydrolases superfamily. HutI family. The cofactor is Zn(2+). Requires Fe(3+) as cofactor.

Its subcellular location is the cytoplasm. The enzyme catalyses 4-imidazolone-5-propanoate + H2O = N-formimidoyl-L-glutamate. The protein operates within amino-acid degradation; L-histidine degradation into L-glutamate; N-formimidoyl-L-glutamate from L-histidine: step 3/3. In terms of biological role, catalyzes the hydrolytic cleavage of the carbon-nitrogen bond in imidazolone-5-propanoate to yield N-formimidoyl-L-glutamate. It is the third step in the universal histidine degradation pathway. The sequence is that of Imidazolonepropionase from Salmonella agona (strain SL483).